The primary structure comprises 236 residues: Ribosome maturation protein SDO1 homolog (236 aa).

It belongs to the SDO1/SBDS family.

In Pyrococcus abyssi (strain GE5 / Orsay), this protein is Ribosome maturation protein SDO1 homolog.